The sequence spans 383 residues: Lipoyl synthase, mitochondrial (383 aa).

The transit peptide at 1 to 19 directs the protein to the mitochondrion; it reads MHASTLTRCMRVAQNARCL. Positions 69–97 are disordered; sequence DAAPGTKPSRKPNASNRKPKWLKAQPTQG. [4Fe-4S] cluster contacts are provided by cysteine 116, cysteine 121, cysteine 127, cysteine 147, cysteine 151, cysteine 154, and serine 362. The Radical SAM core domain maps to 132-351; sequence KDGIATATIM…QKVAEQMGFL (220 aa).

Belongs to the radical SAM superfamily. Lipoyl synthase family. [4Fe-4S] cluster is required as a cofactor.

The protein localises to the mitochondrion. The enzyme catalyses [[Fe-S] cluster scaffold protein carrying a second [4Fe-4S](2+) cluster] + N(6)-octanoyl-L-lysyl-[protein] + 2 oxidized [2Fe-2S]-[ferredoxin] + 2 S-adenosyl-L-methionine + 4 H(+) = [[Fe-S] cluster scaffold protein] + N(6)-[(R)-dihydrolipoyl]-L-lysyl-[protein] + 4 Fe(3+) + 2 hydrogen sulfide + 2 5'-deoxyadenosine + 2 L-methionine + 2 reduced [2Fe-2S]-[ferredoxin]. Its pathway is protein modification; protein lipoylation via endogenous pathway; protein N(6)-(lipoyl)lysine from octanoyl-[acyl-carrier-protein]: step 2/2. In terms of biological role, catalyzes the radical-mediated insertion of two sulfur atoms into the C-6 and C-8 positions of the octanoyl moiety bound to the lipoyl domains of lipoate-dependent enzymes, thereby converting the octanoylated domains into lipoylated derivatives. The polypeptide is Lipoyl synthase, mitochondrial (Phytophthora infestans (strain T30-4) (Potato late blight agent)).